Consider the following 380-residue polypeptide: Cobalt-precorrin-5B C(1)-methyltransferase (380 aa).

The protein belongs to the CbiD family.

It catalyses the reaction Co-precorrin-5B + S-adenosyl-L-methionine = Co-precorrin-6A + S-adenosyl-L-homocysteine. It functions in the pathway cofactor biosynthesis; adenosylcobalamin biosynthesis; cob(II)yrinate a,c-diamide from sirohydrochlorin (anaerobic route): step 6/10. Functionally, catalyzes the methylation of C-1 in cobalt-precorrin-5B to form cobalt-precorrin-6A. The polypeptide is Cobalt-precorrin-5B C(1)-methyltransferase (Salinispora arenicola (strain CNS-205)).